The chain runs to 397 residues: uncharacterized protein (397 aa).

Phosphoserine is present on residues serine 115 and serine 141. The interval 135–156 (NSLNHDSPPHTPARRSDNSTSK) is disordered. Lysine 239 is covalently cross-linked (Glycyl lysine isopeptide (Lys-Gly) (interchain with G-Cter in SUMO2)). A phosphoserine mark is found at serine 269 and serine 296. Residues 289–316 (GRGPTKASPQPALTVKAKATSSATTLAS) are disordered. Residues 300–316 (ALTVKAKATSSATTLAS) are compositionally biased toward low complexity. Phosphoserine is present on serine 342. Residues 354–397 (SEAQDSQVTSTKSPTVRCIVPDPPAPLASQRPPRRRWRRTCKDC) form a disordered region. Residues 356-367 (AQDSQVTSTKSP) are compositionally biased toward polar residues. Positions 385–397 (PPRRRWRRTCKDC) are enriched in basic residues.

This is an uncharacterized protein from Rattus norvegicus (Rat).